Here is a 156-residue protein sequence, read N- to C-terminus: Small ribosomal subunit protein uS10m (156 aa).

This sequence belongs to the universal ribosomal protein uS10 family.

It localises to the mitochondrion. Ribosomal protein required for normal mitochondrial function and normal larval development. Thought to have a role in insulin/IGF signaling. The chain is Small ribosomal subunit protein uS10m (mrps-10) from Caenorhabditis elegans.